The sequence spans 127 residues: Small ribosomal subunit protein uS11 (127 aa).

Belongs to the universal ribosomal protein uS11 family. As to quaternary structure, part of the 30S ribosomal subunit. Interacts with proteins S7 and S18. Binds to IF-3.

Its function is as follows. Located on the platform of the 30S subunit, it bridges several disparate RNA helices of the 16S rRNA. Forms part of the Shine-Dalgarno cleft in the 70S ribosome. The polypeptide is Small ribosomal subunit protein uS11 (Anaeromyxobacter sp. (strain Fw109-5)).